The primary structure comprises 376 residues: 5-hydroxytryptamine receptor 1D (376 aa).

Positions 1–22 (MSPPNQSEEGLPQEASNRSLNA) are disordered. Residues N5, N17, and N21 are each glycosylated (N-linked (GlcNAc...) asparagine). 3 helical membrane-spanning segments follow: residues 39–64 (VSLVVVLSIITLATVLSNAFVLTTIL), 76–97 (LIGSLATTDLLVSILVMPISIA), and 110–134 (LCDIWVSSDITCCTASILHLCVIAL). An intrachain disulfide couples C111 to C188. Residues D118 and C122 each contribute to the serotonin site. The short motif at 135–137 (DRY) is the DRY motif; important for ligand-induced conformation changes element. A run of 4 helical transmembrane segments spans residues 155–176 (AGAMIAAVWVISICISIPPLFW), 195–218 (ISYTIYSTCGAFYIPSVLLIILYS), 300–325 (KTLGIILGAFIVCWLPFFVVSLVLPI), and 335–358 (ALFDFFTWLGYLNSLINPIIYTVF). A serotonin-binding site is contributed by S320. Residues 351-355 (NPIIY) carry the NPxxY motif; important for ligand-induced conformation changes and signaling motif.

This sequence belongs to the G-protein coupled receptor 1 family. In terms of assembly, homodimer. Heterodimer with HTR1B.

It localises to the cell membrane. Its function is as follows. G-protein coupled receptor for 5-hydroxytryptamine (serotonin). Also functions as a receptor for ergot alkaloid derivatives, various anxiolytic and antidepressant drugs and other psychoactive substances. Ligand binding causes a conformation change that triggers signaling via guanine nucleotide-binding proteins (G proteins) and modulates the activity of downstream effectors, such as adenylate cyclase. HTR1D is coupled to G(i)/G(o) G alpha proteins and mediates inhibitory neurotransmission by inhibiting adenylate cyclase activity. Regulates the release of 5-hydroxytryptamine in the brain, and thereby affects neural activity. May also play a role in regulating the release of other neurotransmitters. May play a role in vasoconstriction. The chain is 5-hydroxytryptamine receptor 1D (HTR1D) from Cavia porcellus (Guinea pig).